Here is a 167-residue protein sequence, read N- to C-terminus: Bacterial non-heme ferritin (167 aa).

In terms of domain architecture, Ferritin-like diiron spans 2-145; sequence LNKELLDALN…THIDYLNRIG (144 aa). Fe cation is bound by residues glutamate 17, glutamate 50, histidine 53, glutamate 94, and glutamine 127.

This sequence belongs to the ferritin family. Prokaryotic subfamily.

The protein resides in the cytoplasm. The catalysed reaction is 4 Fe(2+) + O2 + 6 H2O = 4 iron(III) oxide-hydroxide + 12 H(+). Iron-storage protein. The protein is Bacterial non-heme ferritin (ftnA) of Staphylococcus saprophyticus subsp. saprophyticus (strain ATCC 15305 / DSM 20229 / NCIMB 8711 / NCTC 7292 / S-41).